The chain runs to 341 residues: Anthranilate phosphoribosyltransferase (341 aa).

Residues Gly-80, Gly-83–Asp-84, Thr-88, Asn-90–Thr-93, Lys-108–Ser-116, and Ser-120 each bind 5-phospho-alpha-D-ribose 1-diphosphate. Gly-80 serves as a coordination point for anthranilate. Ser-92 is a binding site for Mg(2+). Anthranilate is bound at residue Asn-111. Anthranilate is bound at residue Arg-166. Mg(2+) contacts are provided by Asp-225 and Glu-226.

It belongs to the anthranilate phosphoribosyltransferase family. Homodimer. Mg(2+) is required as a cofactor.

It carries out the reaction N-(5-phospho-beta-D-ribosyl)anthranilate + diphosphate = 5-phospho-alpha-D-ribose 1-diphosphate + anthranilate. The protein operates within amino-acid biosynthesis; L-tryptophan biosynthesis; L-tryptophan from chorismate: step 2/5. In terms of biological role, catalyzes the transfer of the phosphoribosyl group of 5-phosphorylribose-1-pyrophosphate (PRPP) to anthranilate to yield N-(5'-phosphoribosyl)-anthranilate (PRA). The polypeptide is Anthranilate phosphoribosyltransferase (Shouchella clausii (strain KSM-K16) (Alkalihalobacillus clausii)).